The following is a 312-amino-acid chain: GDP-L-fucose synthase (312 aa).

11–17 contributes to the NADP(+) binding site; the sequence is GGRGMVG. Y136 acts as the Proton donor/acceptor in catalysis. NADP(+)-binding residues include K140 and H179. Substrate is bound by residues K187, W202, and R209.

It belongs to the NAD(P)-dependent epimerase/dehydratase family. Fucose synthase subfamily.

The enzyme catalyses GDP-beta-L-fucose + NADP(+) = GDP-4-dehydro-alpha-D-rhamnose + NADPH + H(+). It functions in the pathway nucleotide-sugar biosynthesis; GDP-L-fucose biosynthesis via de novo pathway; GDP-L-fucose from GDP-alpha-D-mannose: step 2/2. Catalyzes the two-step NADP-dependent conversion of GDP-4-dehydro-6-deoxy-D-mannose to GDP-fucose, involving an epimerase and a reductase reaction. In Azorhizobium caulinodans (strain ATCC 43989 / DSM 5975 / JCM 20966 / LMG 6465 / NBRC 14845 / NCIMB 13405 / ORS 571), this protein is GDP-L-fucose synthase.